Here is a 126-residue protein sequence, read N- to C-terminus: Large ribosomal subunit protein bL17 (126 aa).

This sequence belongs to the bacterial ribosomal protein bL17 family. Part of the 50S ribosomal subunit. Contacts protein L32.

In Aliivibrio fischeri (strain ATCC 700601 / ES114) (Vibrio fischeri), this protein is Large ribosomal subunit protein bL17.